The chain runs to 302 residues: O-antigen biosynthesis glycosyltransferase WbnK (302 aa).

Belongs to the glycosyltransferase 11 family.

It carries out the reaction beta-D-Gal-(1-&gt;3)-alpha-D-GalNAc-(1-&gt;3)-alpha-D-GalNAc-di-trans,octa-cis-undecaprenyl diphosphate + GDP-beta-L-fucose = alpha-L-Fuc-(1-&gt;2)-beta-D-Gal-(1-&gt;3)-alpha-D-GalNAc-(1-&gt;3)-alpha-D-GalNAc-di-trans,octa-cis-undecaprenyl diphosphate + GDP + H(+). It participates in bacterial outer membrane biogenesis; LPS O-antigen biosynthesis. Its function is as follows. Involved in the assembly of the O-repeating unit during O-antigen biosynthesis. The protein is O-antigen biosynthesis glycosyltransferase WbnK of Escherichia coli.